The following is a 219-amino-acid chain: AA11 family lytic polysaccharide monooxygenase A (219 aa).

The first 18 residues, 1–18 (MMLSKVVMGLLTASLAAA), serve as a signal peptide directing secretion. His19 lines the Cu(+) pocket. Intrachain disulfides connect Cys58–Cys154, Cys94–Cys116, and Cys185–Cys218. Asn80 carries N-linked (GlcNAc...) asparagine glycosylation. His89 lines the Cu(+) pocket.

Belongs to the polysaccharide monooxygenase AA11 family. It depends on Cu(2+) as a cofactor.

Its function is as follows. Lytic polysaccharide monooxygenase (LPMO) that depolymerizes chitin via the oxidation of scissile beta-(1-4)-glycosidic bonds, yielding C1 or C4 oxidation products. Catalysis by LPMOs requires the reduction of the active-site copper from Cu(II) to Cu(I) by a reducing agent and H(2)O(2) or O(2) as a cosubstrate. Has considerable affinity for alpha-chitin and, more so, beta-chitin. Active toward both alpha-chitin and beta-chitin allomorphs and enhances chitin degradation by an endoacting chitinase, in particular for alpha-chitin, and so plays a role in fungal chitin turnover. The catalytic activity increases when supplying reactions with hydrogen peroxide, confirming that it has peroxygenase activity. Does not show activity on phosphoric acid-swollen cellulose (PASC), Avicel, tamarind xyloglucan, birchwood xylan, beechwood xylan, acetyl glucuronoxylan from aspen, ivory nut mannan, acetylated konjac glucomannan, potato starch, heparin, hyaluronic acid, and chitosan. In Aspergillus fumigatus (strain CBS 144.89 / FGSC A1163 / CEA10) (Neosartorya fumigata), this protein is AA11 family lytic polysaccharide monooxygenase A.